A 356-amino-acid chain; its full sequence is Protein HEXIM1 (356 aa).

2 stretches are compositionally biased toward basic and acidic residues: residues 1–11 (MAEPLLSEHQH) and 24–47 (VHEE…DSRW). Residues 1–160 (MAEPLLSEHQ…RRRPSKKKRH (160 aa)) form a disordered region. Over residues 48 to 58 (QSRASLQSGSR) the composition is skewed to polar residues. Positions 84-93 (CLEKGEKGQN) are enriched in basic and acidic residues. Phosphoserine occurs at positions 98 and 103. A compositionally biased stretch (basic residues) spans 145–160 (LGKKKHRRRPSKKKRH). A basic region; mediates nuclear localization and interaction with 7SK snRNA and NR3C1 region spans residues 147–174 (KKKHRRRPSKKKRHWKPYYKLTWEEKKK). The tract at residues 199-202 (PYNT) is interaction with P-TEFb. The tract at residues 207-247 (MDDHDQEEPDLKTGLYPKRAAAKSDDTSDEDFVEEAGEEDG) is autoinhibitory acidic region; in absence of 7SK snRNA interacts with the basic region preventing interaction with P-TEFb and modulating subcellular localization. The segment at 209–259 (DHDQEEPDLKTGLYPKRAAAKSDDTSDEDFVEEAGEEDGGSDGMGGDGSEF) is disordered. Residue Ser-230 is modified to Phosphoserine. At Thr-233 the chain carries Phosphothreonine. Positions 233 to 248 (TSDEDFVEEAGEEDGG) are enriched in acidic residues. Residues Ser-234, Ser-249, and Ser-257 each carry the phosphoserine modification. Residues 280–346 (SKQELIKEYL…LTENELHRQQ (67 aa)) are a coiled coil. The segment at 283-311 (ELIKEYLELEKCLSRKEDENNRLRLESKR) is mediates interaction with CCNT1. Residues 307 to 352 (LESKRLGGVDARVRELELELDRLRAENRQLLTENELHRQQERAPPS) are required for inhibition of ESR1-dependent transcription. The segment at 337–356 (LTENELHRQQERAPPSKFGD) is disordered.

Belongs to the HEXIM family. As to quaternary structure, homooligomer and heterooligomer with HEXIM2; probably dimeric. Core component of the 7SK RNP complex, at least composed of 7SK RNA, LARP7, MEPCE, HEXIM1 (or HEXIM2) and P-TEFb (composed of CDK9 and CCNT1/cyclin-T1). Interacts with the N-CoR complex through NCOR1. Interacts with ESR1 and NR3C1. May interact with NF-kappa-B through RELA. Interacts with CCNT2; mediates formation of a tripartite complex with KPNA2. Part of the HDP-RNP complex composed of at least HEXIM1, PRKDC, XRCC5, XRCC6, paraspeckle proteins (SFPQ, NONO, PSPC1, RBM14, and MATR3) and NEAT1 non-coding RNA.

The protein localises to the nucleus. It is found in the cytoplasm. Functionally, transcriptional regulator which functions as a general RNA polymerase II transcription inhibitor. Core component of the 7SK RNP complex: in cooperation with 7SK snRNA sequesters P-TEFb in a large inactive 7SK snRNP complex preventing RNA polymerase II phosphorylation and subsequent transcriptional elongation. May also regulate NF-kappa-B, ESR1, NR3C1 and CIITA-dependent transcriptional activity. Plays a role in the regulation of DNA virus-mediated innate immune response by assembling into the HDP-RNP complex, a complex that serves as a platform for IRF3 phosphorylation and subsequent innate immune response activation through the cGAS-STING pathway. The protein is Protein HEXIM1 (Hexim1) of Rattus norvegicus (Rat).